A 184-amino-acid polypeptide reads, in one-letter code: Oligoribonuclease (184 aa).

Positions 8-171 constitute an Exonuclease domain; that stretch reads LIWIDLEMTG…EDIRESVVEL (164 aa). Residue tyrosine 129 is part of the active site.

This sequence belongs to the oligoribonuclease family.

It is found in the cytoplasm. Functionally, 3'-to-5' exoribonuclease specific for small oligoribonucleotides. In Buchnera aphidicola subsp. Acyrthosiphon pisum (strain APS) (Acyrthosiphon pisum symbiotic bacterium), this protein is Oligoribonuclease.